The sequence spans 265 residues: Hydroxyethylthiazole kinase 2 (265 aa).

Met-39 lines the substrate pocket. ATP-binding residues include Lys-115 and Thr-168. Residue Gly-195 coordinates substrate.

Belongs to the Thz kinase family. It depends on Mg(2+) as a cofactor.

It catalyses the reaction 5-(2-hydroxyethyl)-4-methylthiazole + ATP = 4-methyl-5-(2-phosphooxyethyl)-thiazole + ADP + H(+). It functions in the pathway cofactor biosynthesis; thiamine diphosphate biosynthesis; 4-methyl-5-(2-phosphoethyl)-thiazole from 5-(2-hydroxyethyl)-4-methylthiazole: step 1/1. Its function is as follows. Catalyzes the phosphorylation of the hydroxyl group of 4-methyl-5-beta-hydroxyethylthiazole (THZ). This chain is Hydroxyethylthiazole kinase 2, found in Clostridium botulinum (strain 657 / Type Ba4).